The following is a 262-amino-acid chain: R3H domain-containing protein 4 (262 aa).

Disordered regions lie at residues 1-27 and 132-155; these read MVAL…PGCL and YLED…RRED. A compositionally biased stretch (basic and acidic residues) spans 146–155; that stretch reads GRGEDRRRED. An R3H domain is found at 182–245; sequence METLESWEER…RRQMKVSNRH (64 aa).

It localises to the nucleus. This is R3H domain-containing protein 4 (R3hdm4) from Mus musculus (Mouse).